The following is a 212-amino-acid chain: MGTNKPVVIGIAGGSGSGKTSVTKAIFDHFKGHSILILEQDYYYKDQSHLPMEERLKTNYDHPLAFDNDLLIEHLQQLLAYKQVDKPVYDYTLHTRSEEIIPVEPKDVIILEGILILEDPRLCELMDIKLFVDTDADLRILRRMQRDIKERGRTMDSVIDQYVNVVRPMHNQFIEPSKKFADIIIPEGGQNHVAIDIMVTKIATILEQKVNL.

Residue 13–20 (GGSGSGKT) participates in ATP binding.

It belongs to the uridine kinase family.

It is found in the cytoplasm. The catalysed reaction is uridine + ATP = UMP + ADP + H(+). It carries out the reaction cytidine + ATP = CMP + ADP + H(+). It functions in the pathway pyrimidine metabolism; CTP biosynthesis via salvage pathway; CTP from cytidine: step 1/3. Its pathway is pyrimidine metabolism; UMP biosynthesis via salvage pathway; UMP from uridine: step 1/1. The polypeptide is Uridine kinase (Bacillus thuringiensis (strain Al Hakam)).